The primary structure comprises 600 residues: Glutamine--fructose-6-phosphate aminotransferase [isomerizing] (600 aa).

Cys2 acts as the Nucleophile; for GATase activity in catalysis. The region spanning 2 to 217 (CGIVGFIGEQ…DKEIVIVMKE (216 aa)) is the Glutamine amidotransferase type-2 domain. 2 SIS domains span residues 283 to 422 (IRNA…AKGE) and 452 to 590 (LAKQ…VDKP). Lys595 functions as the For Fru-6P isomerization activity in the catalytic mechanism.

Homodimer.

The protein localises to the cytoplasm. It catalyses the reaction D-fructose 6-phosphate + L-glutamine = D-glucosamine 6-phosphate + L-glutamate. In terms of biological role, catalyzes the first step in hexosamine metabolism, converting fructose-6P into glucosamine-6P using glutamine as a nitrogen source. In Bacillus anthracis, this protein is Glutamine--fructose-6-phosphate aminotransferase [isomerizing].